The following is a 64-amino-acid chain: Conotoxin Ts-011 (64 aa).

Residues 1-22 (MHCLPVPVILLLLIASTPSVDA) form the signal peptide. Positions 23–51 (RPKTKDDVPPASFHGADNANRILRTLWNL) are excised as a propeptide. I63 bears the Isoleucine amide mark.

The protein belongs to the conotoxin T superfamily. In terms of processing, contains 2 disulfide bonds that can be either 'C1-C3, C2-C4' or 'C1-C4, C2-C3', since these disulfide connectivities have been observed for conotoxins with cysteine framework V (for examples, see AC P0DQQ7 and AC P81755). As to expression, expressed by the venom duct.

The protein resides in the secreted. This chain is Conotoxin Ts-011, found in Conus tessulatus (Tessellate cone).